Here is a 484-residue protein sequence, read N- to C-terminus: Glutamyl-tRNA(Gln) amidotransferase subunit A (484 aa).

Active-site charge relay system residues include Lys76 and Ser151. Ser175 functions as the Acyl-ester intermediate in the catalytic mechanism.

Belongs to the amidase family. GatA subfamily. As to quaternary structure, heterotrimer of A, B and C subunits.

The catalysed reaction is L-glutamyl-tRNA(Gln) + L-glutamine + ATP + H2O = L-glutaminyl-tRNA(Gln) + L-glutamate + ADP + phosphate + H(+). In terms of biological role, allows the formation of correctly charged Gln-tRNA(Gln) through the transamidation of misacylated Glu-tRNA(Gln) in organisms which lack glutaminyl-tRNA synthetase. The reaction takes place in the presence of glutamine and ATP through an activated gamma-phospho-Glu-tRNA(Gln). The sequence is that of Glutamyl-tRNA(Gln) amidotransferase subunit A from Cellvibrio japonicus (strain Ueda107) (Pseudomonas fluorescens subsp. cellulosa).